Here is a 209-residue protein sequence, read N- to C-terminus: Redox-sensing transcriptional repressor Rex (209 aa).

The segment at residues 16–55 (LYYRFIQNLSLSGKQRVSSAELSEAVKVDSATIRRDFSYF) is a DNA-binding region (H-T-H motif). 90–95 (GVGNLG) is an NAD(+) binding site.

The protein belongs to the transcriptional regulatory Rex family. Homodimer.

Its subcellular location is the cytoplasm. Modulates transcription in response to changes in cellular NADH/NAD(+) redox state. The chain is Redox-sensing transcriptional repressor Rex from Bacillus cereus (strain Q1).